The primary structure comprises 463 residues: Nuclear hormone receptor family member nhr-3 (463 aa).

A DNA-binding region (nuclear receptor) is located at residues 50–125 (STICSVCCDE…VGMEPDAIRP (76 aa)). NR C4-type zinc fingers lie at residues 53–73 (CSVCCDEASGRHYGVVACFGC) and 89–113 (CRYSKKCRIDKAGRNVCRSCRFQKC). Over residues 121 to 131 (DAIRPDRDKTG) the composition is skewed to basic and acidic residues. A disordered region spans residues 121–143 (DAIRPDRDKTGRQKNPRRNTEGS). The 264-residue stretch at 199–462 (EIENIVIQLQ…VLEELLFLDR (264 aa)) folds into the NR LBD domain.

The protein belongs to the nuclear hormone receptor family.

Its subcellular location is the nucleus. Its function is as follows. Orphan nuclear receptor. The sequence is that of Nuclear hormone receptor family member nhr-3 (nhr-3) from Caenorhabditis elegans.